The sequence spans 424 residues: Dihydroorotase-like protein (424 aa).

Belongs to the metallo-dependent hydrolases superfamily. DHOase family. PyrC' subfamily. Heterododecamer of 6 active PyrB subunits and 6 non-catalytic PyrC' subunits.

Its function is as follows. Non-functional DHOase. The sequence is that of Dihydroorotase-like protein from Pseudomonas putida (Arthrobacter siderocapsulatus).